The chain runs to 235 residues: Zorya protein ZorB (235 aa).

The helical transmembrane segment at 25–44 (LMAGLMMVFMFISIAYMHYV) threads the bilayer. Positions 87–225 (QTLEVRFKSP…RVTFKVVTNA (139 aa)) constitute an OmpA-like domain.

The protein belongs to the MotB family.

The protein resides in the cell inner membrane. Component of antiviral defense system Zorya type II, composed of ZorA, ZorB and ZorE. Expression of Zorya type II in E.coli (strain MG1655) confers resistance to phages SECphi7 and T7. While most T7 infected Zorya-containing cells undergo abortive infection, a minority produce viable phage progeny. These eventually accumulate to a high multiplicity of infection, leading to culture collapse by 170 minutes after initial infection. ZorA and ZorB probably assemble in the cell inner membrane and exert their effect there. The polypeptide is Zorya protein ZorB (Escherichia coli (strain ATCC 8739 / DSM 1576 / NBRC 3972 / NCIMB 8545 / WDCM 00012 / Crooks)).